The chain runs to 89 residues: uncharacterized protein (89 aa).

Transmembrane regions (helical) follow at residues 9 to 29, 35 to 55, and 65 to 85; these read ICNFLFQFSLEFFSISSLHSI, ISLSLSLFFLVAILYNIYIYL, and ILFAIPPLCPLCSPCFFFGTS.

The protein resides in the membrane. This is an uncharacterized protein from Schizosaccharomyces pombe (strain 972 / ATCC 24843) (Fission yeast).